A 311-amino-acid polypeptide reads, in one-letter code: DNA-directed RNA polymerase subunit alpha (311 aa).

The segment at 1–226 (MIEFEKPNIT…EHLDLFTNLT (226 aa)) is alpha N-terminal domain (alpha-NTD). The alpha C-terminal domain (alpha-CTD) stretch occupies residues 243–311 (DDRILDRTIE…IDLGLGLKDK (69 aa)).

Belongs to the RNA polymerase alpha chain family. As to quaternary structure, homodimer. The RNAP catalytic core consists of 2 alpha, 1 beta, 1 beta' and 1 omega subunit. When a sigma factor is associated with the core the holoenzyme is formed, which can initiate transcription.

The catalysed reaction is RNA(n) + a ribonucleoside 5'-triphosphate = RNA(n+1) + diphosphate. Functionally, DNA-dependent RNA polymerase catalyzes the transcription of DNA into RNA using the four ribonucleoside triphosphates as substrates. The sequence is that of DNA-directed RNA polymerase subunit alpha from Streptococcus pneumoniae serotype 4 (strain ATCC BAA-334 / TIGR4).